The primary structure comprises 546 residues: Putative serine/threonine-protein kinase L268 (546 aa).

In terms of domain architecture, Cyclin N-terminal spans 1 to 112 (MVCFSKYSGI…ILQTLDFHLV (112 aa)). In terms of domain architecture, Protein kinase spans 260-544 (ITVVKNLGEG…QTLEEFNKFN (285 aa)). Residues 266–274 (LGEGTYGTV) and Lys287 contribute to the ATP site. Asp389 acts as the Proton acceptor in catalysis.

It belongs to the protein kinase superfamily. Ser/Thr protein kinase family.

It catalyses the reaction L-seryl-[protein] + ATP = O-phospho-L-seryl-[protein] + ADP + H(+). The enzyme catalyses L-threonyl-[protein] + ATP = O-phospho-L-threonyl-[protein] + ADP + H(+). The sequence is that of Putative serine/threonine-protein kinase L268 from Acanthamoeba polyphaga mimivirus (APMV).